Reading from the N-terminus, the 184-residue chain is Non-specific lipid transfer protein GPI-anchored 6 (184 aa).

The first 24 residues, 1-24 (MEKSTRTLFITIVITSMLLGFGNS), serve as a signal peptide directing secretion. 4 cysteine pairs are disulfide-bonded: cysteine 33-cysteine 74, cysteine 43-cysteine 58, cysteine 59-cysteine 101, and cysteine 72-cysteine 111. Residues 138 to 158 (NSTSPTQIHKDGTGGGKAEPV) form a disordered region. Serine 160 carries the GPI-anchor amidated serine lipid modification. A propeptide spans 161–184 (NGWKEKSWLGVELLIYLLVSLIFF) (removed in mature form).

The protein belongs to the plant LTP family. In terms of tissue distribution, preferentially expressed in the shoot apical meristem and the root meristem. Also present in the ovules and developing embryos. Observed in cotyledons, hypocotyls, flowers, leaves and siliques. Up-regulated in the epidermis of stems.

It localises to the cell membrane. Lipid transfer protein involved in seed and ovule maturation and development, probably by regulating the fatty acids homeostasis during suberin and sporopollenin biosynthesis or deposition. Contributes to pre-invasive defense against some non-host powdery mildew pathogens by preventing the penetration of the epidermal cell wall by the fungal agents (e.g. Blumeria graminis f. sp. hordei (Bgh)). In Arabidopsis thaliana (Mouse-ear cress), this protein is Non-specific lipid transfer protein GPI-anchored 6.